The sequence spans 303 residues: Recombination-associated protein RdgC (303 aa).

This sequence belongs to the RdgC family.

It localises to the cytoplasm. Its subcellular location is the nucleoid. Functionally, may be involved in recombination. This Pseudoalteromonas translucida (strain TAC 125) protein is Recombination-associated protein RdgC.